The following is a 533-amino-acid chain: Tryptophan N-monooxygenase CYP79A68 (533 aa).

The chain crosses the membrane as a helical span at residues 12 to 32; it reads VTPPISLSLAFIIFMFLVKFI. A glycan (N-linked (GlcNAc...) asparagine) is linked at Asn-209. Cys-471 contacts heme.

This sequence belongs to the cytochrome P450 family. Heme is required as a cofactor. As to expression, confined to buds.

It is found in the membrane. It carries out the reaction L-tryptophan + 2 reduced [NADPH--hemoprotein reductase] + 2 O2 = (E)-(indol-3-yl)acetaldehyde oxime + 2 oxidized [NADPH--hemoprotein reductase] + CO2 + 3 H2O + 2 H(+). Catalyzes with low efficiency E and Z isomers of indole-3-acetaldoxime from tryptophan (Trp). The polypeptide is Tryptophan N-monooxygenase CYP79A68 (Prunus mume (Japanese apricot)).